Consider the following 192-residue polypeptide: GTP cyclohydrolase-2 (192 aa).

GTP is bound at residue 47–51 (RIHSE). Residues Cys52, Cys63, and Cys65 each coordinate Zn(2+). Residues Gln68, 90 to 92 (EGR), and Thr112 each bind GTP. Asp124 serves as the catalytic Proton acceptor. Arg126 (nucleophile) is an active-site residue. GTP contacts are provided by Thr147 and Lys152.

This sequence belongs to the GTP cyclohydrolase II family. It depends on Zn(2+) as a cofactor.

It carries out the reaction GTP + 4 H2O = 2,5-diamino-6-hydroxy-4-(5-phosphoribosylamino)-pyrimidine + formate + 2 phosphate + 3 H(+). The protein operates within cofactor biosynthesis; riboflavin biosynthesis; 5-amino-6-(D-ribitylamino)uracil from GTP: step 1/4. Its function is as follows. Catalyzes the conversion of GTP to 2,5-diamino-6-ribosylamino-4(3H)-pyrimidinone 5'-phosphate (DARP), formate and pyrophosphate. The polypeptide is GTP cyclohydrolase-2 (Picrophilus torridus (strain ATCC 700027 / DSM 9790 / JCM 10055 / NBRC 100828 / KAW 2/3)).